A 227-amino-acid polypeptide reads, in one-letter code: uncharacterized protein (227 aa).

The next 7 membrane-spanning stretches (helical) occupy residues 25 to 45, 49 to 69, 80 to 100, 111 to 131, 144 to 164, 165 to 185, and 201 to 221; these read LLGFSFIPASAGAALAANAGF, AAFGSRWIGFAVVLAFFYGMI, TGVTLLMVFTFGMGVLIGPVL, KIVGIAAAMTAAVFLTMSALA, FLTVGAVILMVAVVANLFLGI, PALALTISAGFVLFSSLMIMW, and AALTLFISLYNIFSSLLNILL.

Its subcellular location is the cell membrane. This is an uncharacterized protein from Neisseria meningitidis serogroup B (strain ATCC BAA-335 / MC58).